Reading from the N-terminus, the 201-residue chain is Zinc finger protein 239 (201 aa).

7 C2H2-type zinc fingers span residues 6-28 (YKCD…HSVH), 34-56 (FKCD…KRVH), 62-84 (YACE…QRVH), 90-112 (YKCG…RCTH), 118-140 (YQCY…LRVH), 146-168 (YHCG…QRVH), and 174-196 (YECS…QRVH).

Belongs to the krueppel C2H2-type zinc-finger protein family. Preferentially expressed in transformed mouse cells.

It localises to the nucleus. In terms of biological role, may be involved in transcriptional regulation. This Mus musculus (Mouse) protein is Zinc finger protein 239 (Znf239).